The primary structure comprises 314 residues: MVFRSPLELYPTHFFLPNFAADPHHRSLLLASGGSGSGSGCSPGAGGGGGSSRAPHEELSMFQLPTLNFSPEQVASVCETLEETGDIERLGRFLWSLPVAPGACEAINKHESILRARAVVAFHTGNFRDLYHILENHKFTKESHGKLQAMWLEAHYQEAEKLRGRPLGPVDKYRVRKKFPLPRTIWDGEQKTHCFKERTRSLLREWYLQDPYPNPSKKRELAQATGLTPTQVGNWFKNRRQRDRAAAAKNRLQHQAIGQSGMRSLAEPGCPTHSSAESPSTAASPTTSVSSLTERAETGTSILSVTSSDSECDV.

A DNA-binding region (homeobox) is located at residues 188–247; sequence GEQKTHCFKERTRSLLREWYLQDPYPNPSKKRELAQATGLTPTQVGNWFKNRRQRDRAAA. Disordered regions lie at residues 214–233 and 240–314; these read NPSK…TQVG and RQRD…ECDV. Low complexity predominate over residues 271-293; it reads PTHSSAESPSTAASPTTSVSSLT. Polar residues predominate over residues 298–314; sequence TGTSILSVTSSDSECDV.

Belongs to the SIX/Sine oculis homeobox family.

It localises to the nucleus. Functionally, transcriptional regulator which can act as both a transcriptional repressor and activator by binding a ATTA homeodomain core recognition sequence on these target genes. During forebrain development represses WNT1 expression allowing zona limitans intrathalamica formation and thereby ensuring proper anterio-posterior patterning of the diencephalon and formation of the rostral diencephalon. Acts as a direct upstream activator of SHH expression in the rostral diencephalon ventral midline and that in turn SHH maintains its expression. In addition, Six3 activity is required for the formation of the telencephalon. During postnatal stages of brain development is necessary for ependymal cell maturation by promoting the maturation of radial glia into ependymal cells through regulation of neuroblast proliferation and migration. Acts on the proliferation and differentiation of neural progenitor cells through activating transcription of CCND1 and CCND2. During early lens formation plays a role in lens induction and specification by activating directly PAX6 in the presumptive lens ectoderm. In turn PAX6 activates SIX3 resulting in activation of PDGFRA and CCND1 promoting cell proliferation. Also is required for the neuroretina development by directly suppressing WNT8B expression in the anterior neural plate territory. Its action during retina development and lens morphogenesis is AES and TLE4-dependent manner. Furthermore, during eye development regulates several genes expression. Before and during early lens development represses the CRYGF promoter by binding a SIX repressor element. Directly activates RHO transcription, or cooperates with CRX or NRL. Six3 also functions in the formation of the proximodistal axis of the optic cup, and promotes the formation of optic vesicles-like structures. During pituitary development, acts in parallel or alternatively with HESX1 to control cell proliferation through Wnt/beta-catenin pathway. Plays a role in eye development by suppressing WNT1 expression and in dorsal-ventral patterning by repressing BMP signaling pathway. The chain is Homeobox protein SIX3 (SIX3) from Gallus gallus (Chicken).